The following is a 391-amino-acid chain: Ferrochelatase (391 aa).

2 residues coordinate Fe cation: His-196 and Glu-281.

It belongs to the ferrochelatase family.

Its subcellular location is the cytoplasm. It carries out the reaction heme b + 2 H(+) = protoporphyrin IX + Fe(2+). It functions in the pathway porphyrin-containing compound metabolism; protoheme biosynthesis; protoheme from protoporphyrin-IX: step 1/1. Its function is as follows. Catalyzes the ferrous insertion into protoporphyrin IX. The sequence is that of Ferrochelatase from Prochlorococcus marinus (strain MIT 9515).